We begin with the raw amino-acid sequence, 999 residues long: Golgin subfamily A member 2 (999 aa).

Positions 1–11 are enriched in pro residues; it reads MWPPRFPPPRP. Disordered stretches follow at residues 1–80 and 244–288; these read MWPP…PAPP and ARQK…YNKD. Residues 1–86 are interaction with p115/USO1; it reads MWPPRFPPPR…PAPPTAATDT (86 aa). Residues Arg18 and Arg30 each carry the dimethylated arginine modification. The Nuclear localization signal signature appears at 26-49; it reads KKKLREYQQKNSPGVPAGAKKKKK. Ser37, Ser66, Ser273, and Ser438 each carry phosphoserine. Residues 147–895 adopt a coiled-coil conformation; the sequence is LTSSNMKELE…VLRLVNERNE (749 aa). The span at 271–280 shows a compositional bias: polar residues; that stretch reads TLSTVSTQQK. The interval 444-468 is disordered; sequence SQMEEPPPPEPPAGPSEAEEQLQGE. Pro residues predominate over residues 448-457; that stretch reads EPPPPEPPAG. Phosphoserine occurs at positions 697, 934, and 978. Positions 989-999 are interaction with GORASP1/GRASP65; the sequence is DENDEVKIMVV.

This sequence belongs to the GOLGA2 family. Homodimer, may assemble into homohexamers. Homotetramer; forms a parallel homotetramer with a flexible rod-like structure that can give rise to I- and Y-shaped conformations. Interacts with GORASP1/GRASP65. The homooligomer forms a complex with GORASP1 with a 1:1 stoichiometry. Interacts with RAB1B that has been activated by GTP-binding. Interacts with p115/USO1; interaction with p115/USO1 inhibits interaction with STX5 and/or RAB1B. Interacts with STX5. Interacts with ZFPL1. Interacts with AKAP450/AKAP9; leading to recruit AKAP450/AKAP9 to the cis-Golgi. In terms of processing, phosphorylated at Ser-37 by CDK1 at the onset of mitosis, inhibiting the interaction with p115/USO1 and triggering Golgi disassembly. A report however suggests that Golgi disassembly is independent of phosphorylation at Ser-37. Phosphorylated at Ser-37 in prophase as the Golgi complex starts to break down, and remains phosphorylated during further breakdown and partitioning of the Golgi fragments in metaphase and anaphase. In telophase, GM130 is dephosphorylated by PP2A as the Golgi fragments start to reassemble. Cleaved by caspases at the onset of apoptosis. Post-translationally, methylation by PRMT5 is required for Golgi ribbon formation. Widely expressed. Detected in brain, kidney, lung, liver, spleen, heart, skeletal muscle, thymus and pancreas. Detected in spermatocytes. Present in oocytes during all oocyte meiotic maturation (at protein level).

The protein resides in the golgi apparatus. The protein localises to the cis-Golgi network membrane. It localises to the endoplasmic reticulum-Golgi intermediate compartment membrane. Its subcellular location is the cytoplasm. It is found in the cytoskeleton. The protein resides in the spindle pole. In terms of biological role, peripheral membrane component of the cis-Golgi stack that acts as a membrane skeleton that maintains the structure of the Golgi apparatus, and as a vesicle thether that facilitates vesicle fusion to the Golgi membrane. Required for normal protein transport from the endoplasmic reticulum to the Golgi apparatus and the cell membrane. Together with p115/USO1 and STX5, involved in vesicle tethering and fusion at the cis-Golgi membrane to maintain the stacked and inter-connected structure of the Golgi apparatus. Plays a central role in mitotic Golgi disassembly: phosphorylation at Ser-37 by CDK1 at the onset of mitosis inhibits the interaction with p115/USO1, preventing tethering of COPI vesicles and thereby inhibiting transport through the Golgi apparatus during mitosis. Also plays a key role in spindle pole assembly and centrosome organization. Promotes the mitotic spindle pole assembly by activating the spindle assembly factor TPX2 to nucleate microtubules around the Golgi and capture them to couple mitotic membranes to the spindle: upon phosphorylation at the onset of mitosis, GOLGA2 interacts with importin-alpha via the nuclear localization signal region, leading to recruit importin-alpha to the Golgi membranes and liberate the spindle assembly factor TPX2 from importin-alpha. TPX2 then activates AURKA kinase and stimulates local microtubule nucleation. Upon filament assembly, nascent microtubules are further captured by GOLGA2, thus linking Golgi membranes to the spindle. Regulates the meiotic spindle pole assembly, probably via the same mechanism. Also regulates the centrosome organization. Also required for the Golgi ribbon formation and glycosylation of membrane and secretory proteins. The protein is Golgin subfamily A member 2 (Golga2) of Mus musculus (Mouse).